Here is a 169-residue protein sequence, read N- to C-terminus: UPF0303 protein Oant_1766 (169 aa).

The protein belongs to the UPF0303 family.

The sequence is that of UPF0303 protein Oant_1766 from Brucella anthropi (strain ATCC 49188 / DSM 6882 / CCUG 24695 / JCM 21032 / LMG 3331 / NBRC 15819 / NCTC 12168 / Alc 37) (Ochrobactrum anthropi).